Here is a 149-residue protein sequence, read N- to C-terminus: Oligosaccharyltransferase complex subunit OSTC (149 aa).

Residues 1–32 lie on the Cytoplasmic side of the membrane; that stretch reads MESLYRVPFLVLECPNLKLKKPPWVHMPSAMT. Residues 33 to 53 traverse the membrane as a helical segment; it reads VYALVVVSYFLITGGIIYDVI. The Extracellular segment spans residues 54 to 83; sequence VEPPSVGSVTDEHGHQRPVAFLAYRVNGQY. A helical transmembrane segment spans residues 84–104; the sequence is IMEGLASSFLFTMGGLGFIIL. Residues 105–117 are Cytoplasmic-facing; it reads DRSNAPNIPKLNR. The chain crosses the membrane as a helical span at residues 118–138; the sequence is FLLLFIGFVCVLLSFFMARVF. The Extracellular segment spans residues 139–149; it reads MRMKLPGYLMG.

It belongs to the OSTC family. Component of STT3A-containing oligosaccharyl transferase (OST-A) complex. STT3A-containing complex assembly occurs through the formation of 3 subcomplexes. Subcomplex 1 contains RPN1 and TMEM258, subcomplex 2 contains the STT3A-specific subunits STT3A, DC2/OSTC, and KCP2 as well as the core subunit OST4, and subcomplex 3 contains RPN2, DAD1, and OST48. The OST-A complex can form stable complexes with the Sec61 complex or with both the Sec61 and TRAP complexes. Interacts with PSEN1 and NCSTN; indicative for an association with the gamma-secretase complex.

Its subcellular location is the endoplasmic reticulum. It localises to the membrane. It participates in protein modification; protein glycosylation. Functionally, subunit of STT3A-containing oligosaccharyl transferase (OST-A) complex that catalyzes the initial transfer of a defined glycan (Glc(3)Man(9)GlcNAc(2) in eukaryotes) from the lipid carrier dolichol-pyrophosphate to an asparagine residue within an Asn-X-Ser/Thr consensus motif in nascent polypeptide chains, the first step in protein N-glycosylation. N-glycosylation occurs cotranslationally and the complex associates with the Sec61 complex at the channel-forming translocon complex that mediates protein translocation across the endoplasmic reticulum (ER). Within the OST-A complex, acts as an adapter that anchors the OST-A complex to the Sec61 complex. May be involved in N-glycosylation of APP (amyloid-beta precursor protein). Can modulate gamma-secretase cleavage of APP by enhancing endoprotelysis of PSEN1. The polypeptide is Oligosaccharyltransferase complex subunit OSTC (Bos taurus (Bovine)).